Reading from the N-terminus, the 338-residue chain is Ketoreductase azaE (338 aa).

Residues Lys41 and Tyr166 each contribute to the NADP(+) site.

The protein belongs to the NAD(P)-dependent epimerase/dehydratase family. Dihydroflavonol-4-reductase subfamily.

Its pathway is secondary metabolite biosynthesis. Ketoreductase; part of the gene cluster that mediates the biosynthesis of azaphilones, a class of fungal metabolites characterized by a highly oxygenated pyrano-quinone bicyclic core and exhibiting a broad range of bioactivities. In the first step, the non-reducing polyketide synthase azaA forms the hexaketide precursor from successive condensations of five malonyl-CoA units, presumably with a simple acetyl-CoA starter unit. The reactive polyketide chain then undergoes a PT-mediated C2-C7 cyclization to afford the aromatic ring and is eventually released as an aldehyde through the R-domain. The putative ketoreductase azaE is proposed to catalyze the reduction of the terminal ketone resulting in the early culture product FK17-P2a. The monooxygenase azaH was demonstrated to be the only enzyme required to convert FK17-P2a to azanigerone E. AzaH first hydroxylates the benzaldehyde intermediate FK17-P2a at C4, which triggers the formation of the pyran-ring to afford azanigerone E. In parallel, the 2,4-dimethylhexanoyl chain is synthesized by the HR-PKS azaB and is proposed to be transferred to the C4-hydroxyl of azanigerone E by the acyltransferase azaD directly from the ACP domain of azaB. Alternatively, the 2,4-dimethyl-hexanoyl chain may be offloaded from the HR-PKS as a carboxylic acid and converted to an acyl-CoA by azaF. The resulting acyl-CoA molecule could then be taken up as a substrate by AzaD to form azanigerone B. To yield the carboxylic acid substituent in azanigerone A, the hydroxypropyl side chain of azanigerone B would need to undergo a C-C oxidative cleavage catalyzed by cytochrome P450 AzaI. AzaI is proposed to act on a vicinal diol that leads to a C-C bond scission either through an alkoxyradical intermediate or a peroxy complex. In the biosynthesis of azanigerone A, azanigerone B first undergoes hydroxylation at C10, possibly catalyzed by one of the two FAD-dependent monooxygenases encoded in the cluster, azaG or azaL, resulting in the vicinal diol azanigerone C. Oxidative cleavage of azanigerone C by azaI would yield the corresponding aldehyde derivative of azanigerone A. Finally, the dehydrogenase azaJ is proposed to convert the aldehyde functional group into the carboxylic acid, completing the conversion from azanigerone B to azanigerone A. Alternatively, the oxidation of aldehyde to carboxylic acid may be catalyzed by the same P450 enzyme azaI via consecutive oxidation or by endogenous alcohol dehydrogenase. The chain is Ketoreductase azaE from Aspergillus niger (strain ATCC 1015 / CBS 113.46 / FGSC A1144 / LSHB Ac4 / NCTC 3858a / NRRL 328 / USDA 3528.7).